Reading from the N-terminus, the 88-residue chain is Putative defensin-like protein 256 (88 aa).

A signal peptide spans 1-25 (MKSSIFFKLLLLVSLLVVIFRQSYA). 3 disulfide bridges follow: Cys30–Cys46, Cys36–Cys53, and Cys40–Cys55.

Belongs to the DEFL family.

It is found in the secreted. The polypeptide is Putative defensin-like protein 256 (Arabidopsis thaliana (Mouse-ear cress)).